A 332-amino-acid chain; its full sequence is L-lactate dehydrogenase A chain (332 aa).

Ala-2 carries the post-translational modification N-acetylalanine. Lys-5 bears the N6-acetyllysine; alternate mark. Lys-5 is modified (N6-succinyllysine; alternate). At Lys-14 the chain carries N6-acetyllysine. NAD(+) is bound at residue 29 to 57 (GAVGMACAISILMKDLADELALVDVMEDK). Lys-57 is modified (N6-acetyllysine; alternate). A Glycyl lysine isopeptide (Lys-Gly) (interchain with G-Cter in SUMO2); alternate cross-link involves residue Lys-57. Lys-81 is subject to N6-acetyllysine. NAD(+) is bound at residue Arg-99. Residue Arg-106 participates in substrate binding. The residue at position 118 (Lys-118) is an N6-acetyllysine; alternate. Lys-118 carries the post-translational modification N6-succinyllysine; alternate. Lys-126 carries the N6-acetyllysine modification. An NAD(+)-binding site is contributed by Asn-138. Residues Asn-138 and Arg-169 each contribute to the substrate site. His-193 acts as the Proton acceptor in catalysis. Lys-224 and Lys-232 each carry N6-acetyllysine. The residue at position 239 (Tyr-239) is a Phosphotyrosine. Position 243 is an N6-acetyllysine (Lys-243). Position 248 (Thr-248) interacts with substrate. Thr-309 bears the Phosphothreonine mark. Position 310 is a phosphoserine (Ser-310). Lys-318 bears the N6-acetyllysine; alternate mark. Lys-318 is modified (N6-succinyllysine; alternate). Thr-322 carries the phosphothreonine modification.

Belongs to the LDH/MDH superfamily. LDH family. Homotetramer. Interacts with PTEN upstream reading frame protein MP31. Post-translationally, ISGylated.

It localises to the cytoplasm. The catalysed reaction is (S)-lactate + NAD(+) = pyruvate + NADH + H(+). It participates in fermentation; pyruvate fermentation to lactate; (S)-lactate from pyruvate: step 1/1. Its function is as follows. Interconverts simultaneously and stereospecifically pyruvate and lactate with concomitant interconversion of NADH and NAD(+). In Oryctolagus cuniculus (Rabbit), this protein is L-lactate dehydrogenase A chain (LDHA).